The primary structure comprises 221 residues: Endonuclease V (221 aa).

2 residues coordinate Mg(2+): Asp-44 and Asp-112.

This sequence belongs to the endonuclease V family. Requires Mg(2+) as cofactor.

It is found in the cytoplasm. It catalyses the reaction Endonucleolytic cleavage at apurinic or apyrimidinic sites to products with a 5'-phosphate.. DNA repair enzyme involved in the repair of deaminated bases. Selectively cleaves double-stranded DNA at the second phosphodiester bond 3' to a deoxyinosine leaving behind the intact lesion on the nicked DNA. The polypeptide is Endonuclease V (Trichormus variabilis (strain ATCC 29413 / PCC 7937) (Anabaena variabilis)).